Here is a 184-residue protein sequence, read N- to C-terminus: Ribosome-recycling factor (184 aa).

A disordered region spans residues 137-158 (DSIKAKQKDGIPEDEAKRGQDE).

Belongs to the RRF family.

The protein resides in the cytoplasm. Responsible for the release of ribosomes from messenger RNA at the termination of protein biosynthesis. May increase the efficiency of translation by recycling ribosomes from one round of translation to another. The chain is Ribosome-recycling factor from Desulforamulus reducens (strain ATCC BAA-1160 / DSM 100696 / MI-1) (Desulfotomaculum reducens).